The primary structure comprises 418 residues: RuvB-like helicase 2 (418 aa).

ATP is bound at residue 65–72; it reads GDRGSGKT.

Belongs to the RuvB family. As to quaternary structure, component of the SWR1 chromatin remodeling complex, the INO80 chromatin remodeling complex, and of the R2TP complex.

It is found in the nucleus. It carries out the reaction ATP + H2O = ADP + phosphate + H(+). DNA helicase which participates in several chromatin remodeling complexes, including the SWR1 and the INO80 complexes. The SWR1 complex mediates the ATP-dependent exchange of histone H2A for the H2A variant HZT1 leading to transcriptional regulation of selected genes by chromatin remodeling. The INO80 complex remodels chromatin by shifting nucleosomes and is involved in DNA repair. Also involved in pre-rRNA processing. This Encephalitozoon cuniculi (strain GB-M1) (Microsporidian parasite) protein is RuvB-like helicase 2 (RVB2).